The following is a 242-amino-acid chain: Anamorsin homolog (242 aa).

The N-terminal SAM-like domain stretch occupies residues methionine 1–leucine 140. A linker region spans residues serine 141 to asparagine 162. The [4Fe-4S] cluster site is built by cysteine 205, cysteine 208, cysteine 216, and cysteine 219. 2 consecutive short sequence motifs (cx2C motif) follow at residues cysteine 205 to cysteine 208 and cysteine 216 to cysteine 219. Positions cysteine 205–cysteine 219 are fe-S binding site B.

Belongs to the anamorsin family. Monomer. Requires [4Fe-4S] cluster as cofactor.

The protein localises to the cytoplasm. The protein resides in the mitochondrion intermembrane space. In terms of biological role, component of the cytosolic iron-sulfur (Fe-S) protein assembly (CIA) machinery. Required for the maturation of extramitochondrial Fe-S proteins. Part of an electron transfer chain functioning in an early step of cytosolic Fe-S biogenesis, facilitating the de novo assembly of a [4Fe-4S] cluster on the cytosolic Fe-S scaffold complex. Electrons are transferred from NADPH via a FAD- and FMN-containing diflavin oxidoreductase. Together with the diflavin oxidoreductase, also required for the assembly of the diferric tyrosyl radical cofactor of ribonucleotide reductase (RNR), probably by providing electrons for reduction during radical cofactor maturation in the catalytic small subunit. The polypeptide is Anamorsin homolog (Plasmodium knowlesi (strain H)).